The chain runs to 632 residues: Phosphomethylpyrimidine synthase (632 aa).

Substrate contacts are provided by residues N237, M266, Y295, H331, 351-353 (SRG), 392-395 (DGLR), and E431. Residue H435 coordinates Zn(2+). Y458 contacts substrate. Residue H499 participates in Zn(2+) binding. C579, C582, and C587 together coordinate [4Fe-4S] cluster.

The protein belongs to the ThiC family. In terms of assembly, homodimer. [4Fe-4S] cluster serves as cofactor.

The enzyme catalyses 5-amino-1-(5-phospho-beta-D-ribosyl)imidazole + S-adenosyl-L-methionine = 4-amino-2-methyl-5-(phosphooxymethyl)pyrimidine + CO + 5'-deoxyadenosine + formate + L-methionine + 3 H(+). It functions in the pathway cofactor biosynthesis; thiamine diphosphate biosynthesis. Catalyzes the synthesis of the hydroxymethylpyrimidine phosphate (HMP-P) moiety of thiamine from aminoimidazole ribotide (AIR) in a radical S-adenosyl-L-methionine (SAM)-dependent reaction. This Nitrosomonas eutropha (strain DSM 101675 / C91 / Nm57) protein is Phosphomethylpyrimidine synthase.